A 176-amino-acid chain; its full sequence is WASH complex subunit 3 (176 aa).

A coiled-coil region spans residues 47–74; that stretch reads ETKFVEMERQLQKTEAALIILEAKLASI. Disordered regions lie at residues 84–123 and 152–176; these read ATEAPAISNQQRNEEASMVDTTEPPTTENPTEPELPPESV and KMQSEGLEPRILDTPDLILADGQRE. Positions 104–115 are enriched in low complexity; that stretch reads TTEPPTTENPTE.

It belongs to the CCDC53 family. As to quaternary structure, component of the WASH complex.

The protein resides in the early endosome. Functionally, acts at least in part as component of the WASH complex which may regulate wash nucleation-promoting factor (NPF) activity and is required for its membrane targeting during endosomal sorting. During embryogenesis, not involved in the wash-dependent developmental migration of hemocytes anteriorly from the tail. This Drosophila melanogaster (Fruit fly) protein is WASH complex subunit 3.